Here is a 566-residue protein sequence, read N- to C-terminus: Proline--tRNA ligase 1 (566 aa).

Belongs to the class-II aminoacyl-tRNA synthetase family. ProS type 1 subfamily. Homodimer.

Its subcellular location is the cytoplasm. It carries out the reaction tRNA(Pro) + L-proline + ATP = L-prolyl-tRNA(Pro) + AMP + diphosphate. Catalyzes the attachment of proline to tRNA(Pro) in a two-step reaction: proline is first activated by ATP to form Pro-AMP and then transferred to the acceptor end of tRNA(Pro). As ProRS can inadvertently accommodate and process non-cognate amino acids such as alanine and cysteine, to avoid such errors it has two additional distinct editing activities against alanine. One activity is designated as 'pretransfer' editing and involves the tRNA(Pro)-independent hydrolysis of activated Ala-AMP. The other activity is designated 'posttransfer' editing and involves deacylation of mischarged Ala-tRNA(Pro). The misacylated Cys-tRNA(Pro) is not edited by ProRS. This Bacillus cereus (strain ATCC 14579 / DSM 31 / CCUG 7414 / JCM 2152 / NBRC 15305 / NCIMB 9373 / NCTC 2599 / NRRL B-3711) protein is Proline--tRNA ligase 1.